The following is a 452-amino-acid chain: tRNA modification GTPase MnmE (452 aa).

Positions 24, 81, and 120 each coordinate (6S)-5-formyl-5,6,7,8-tetrahydrofolate. In terms of domain architecture, TrmE-type G spans 217–373 (GIKTAIVGKT…LIMKIEQMHI (157 aa)). Residue asparagine 227 coordinates K(+). GTP is bound by residues 227–232 (NVGKSS), 246–252 (TDIHGTT), and 271–274 (DTAG). Serine 231 lines the Mg(2+) pocket. K(+) is bound by residues threonine 246, isoleucine 248, and threonine 251. Threonine 252 serves as a coordination point for Mg(2+). Lysine 452 contributes to the (6S)-5-formyl-5,6,7,8-tetrahydrofolate binding site.

Belongs to the TRAFAC class TrmE-Era-EngA-EngB-Septin-like GTPase superfamily. TrmE GTPase family. As to quaternary structure, homodimer. Heterotetramer of two MnmE and two MnmG subunits. The cofactor is K(+).

The protein localises to the cytoplasm. Functionally, exhibits a very high intrinsic GTPase hydrolysis rate. Involved in the addition of a carboxymethylaminomethyl (cmnm) group at the wobble position (U34) of certain tRNAs, forming tRNA-cmnm(5)s(2)U34. This chain is tRNA modification GTPase MnmE, found in Mesoplasma florum (strain ATCC 33453 / NBRC 100688 / NCTC 11704 / L1) (Acholeplasma florum).